Here is a 494-residue protein sequence, read N- to C-terminus: Probable cytosol aminopeptidase (494 aa).

Positions 260 and 265 each coordinate Mn(2+). Residue Lys-272 is part of the active site. Residues Asp-283, Asp-342, and Glu-344 each coordinate Mn(2+). Arg-346 is a catalytic residue.

Belongs to the peptidase M17 family. Mn(2+) is required as a cofactor.

It localises to the cytoplasm. It catalyses the reaction Release of an N-terminal amino acid, Xaa-|-Yaa-, in which Xaa is preferably Leu, but may be other amino acids including Pro although not Arg or Lys, and Yaa may be Pro. Amino acid amides and methyl esters are also readily hydrolyzed, but rates on arylamides are exceedingly low.. It carries out the reaction Release of an N-terminal amino acid, preferentially leucine, but not glutamic or aspartic acids.. Presumably involved in the processing and regular turnover of intracellular proteins. Catalyzes the removal of unsubstituted N-terminal amino acids from various peptides. This is Probable cytosol aminopeptidase from Bacillus cereus (strain Q1).